Reading from the N-terminus, the 749-residue chain is 5-methyltetrahydropteroyltriglutamate--homocysteine methyltransferase (749 aa).

5-methyltetrahydropteroyltri-L-glutamate contacts are provided by residues 15–18 and Lys114; that span reads RELK. L-homocysteine contacts are provided by residues 425-427 and Glu478; that span reads IGS. Residues 425–427 and Glu478 each bind L-methionine; that span reads IGS. 5-methyltetrahydropteroyltri-L-glutamate is bound at residue Trp555. Asp593 lines the L-homocysteine pocket. Asp593 lines the L-methionine pocket. A 5-methyltetrahydropteroyltri-L-glutamate-binding site is contributed by Glu599. The Zn(2+) site is built by His636, Cys638, and Glu660. His689 functions as the Proton donor in the catalytic mechanism. Residue Cys721 participates in Zn(2+) binding.

Belongs to the vitamin-B12 independent methionine synthase family. It depends on Zn(2+) as a cofactor.

The enzyme catalyses 5-methyltetrahydropteroyltri-L-glutamate + L-homocysteine = tetrahydropteroyltri-L-glutamate + L-methionine. Its pathway is amino-acid biosynthesis; L-methionine biosynthesis via de novo pathway; L-methionine from L-homocysteine (MetE route): step 1/1. Catalyzes the transfer of a methyl group from 5-methyltetrahydrofolate to homocysteine resulting in methionine formation. The protein is 5-methyltetrahydropteroyltriglutamate--homocysteine methyltransferase of Streptococcus pneumoniae serotype 19F (strain G54).